The primary structure comprises 335 residues: Sphingomyelinase C (335 aa).

Residues 1–28 form the signal peptide; the sequence is MEKFKIIKTIPKICGAFIFLLFFTFLFG.

It belongs to the neutral sphingomyelinase family.

It localises to the secreted. It carries out the reaction a sphingomyelin + H2O = phosphocholine + an N-acylsphing-4-enine + H(+). Virulence factor that promotes intracellular proliferation by mediating the disruption of the phagocytic vacuole and the release of bacteria into the host cell cytosol. May act in concert with the phospholipases PlcA and PlcB and the hemolysin hly to mediate efficient escape from the vacuole. This Listeria ivanovii protein is Sphingomyelinase C (smcL).